A 620-amino-acid chain; its full sequence is Endoglucanase 21 (620 aa).

The interval 1-39 is disordered; it reads MYGRDPWGGPLEINAADSMTDDDRSRNLQDLDRATPSRP. Residues 1-70 are Cytoplasmic-facing; it reads MYGRDPWGGP…DLGCILVSRK (70 aa). Residues 21–39 are compositionally biased toward basic and acidic residues; it reads DDDRSRNLQDLDRATPSRP. The chain crosses the membrane as a helical; Signal-anchor for type II membrane protein span at residues 71-91; that stretch reads IFLWTLGTIVVTALLSGFITL. Topologically, residues 92–620 are extracellular; the sequence is IVKTLPHHHH…TPPPPAPWTP (529 aa). N-linked (GlcNAc...) asparagine glycans are attached at residues Asn108 and Asn134. Asp166 serves as the catalytic Nucleophile. Residues Asn217, Asn325, Asn346, Asn409, Asn426, and Asn482 are each glycosylated (N-linked (GlcNAc...) asparagine). Active-site residues include His514 and Asp561. A glycan (N-linked (GlcNAc...) asparagine) is linked at Asn567. The active site involves Glu570.

Belongs to the glycosyl hydrolase 9 (cellulase E) family. As to expression, expressed in conductive tissues of young roots, cotyledons, rosette leaves, cauline leaves and sepals. Expressed in the leaf trichome support cells.

Its subcellular location is the cell membrane. It catalyses the reaction Endohydrolysis of (1-&gt;4)-beta-D-glucosidic linkages in cellulose, lichenin and cereal beta-D-glucans.. In Arabidopsis thaliana (Mouse-ear cress), this protein is Endoglucanase 21 (KOR3).